Here is a 189-residue protein sequence, read N- to C-terminus: Peptidyl-tRNA hydrolase (189 aa).

Y15 serves as a coordination point for tRNA. Residue H20 is the Proton acceptor of the active site. Positions 66, 68, and 114 each coordinate tRNA.

It belongs to the PTH family. Monomer.

The protein resides in the cytoplasm. It catalyses the reaction an N-acyl-L-alpha-aminoacyl-tRNA + H2O = an N-acyl-L-amino acid + a tRNA + H(+). Hydrolyzes ribosome-free peptidyl-tRNAs (with 1 or more amino acids incorporated), which drop off the ribosome during protein synthesis, or as a result of ribosome stalling. Its function is as follows. Catalyzes the release of premature peptidyl moieties from peptidyl-tRNA molecules trapped in stalled 50S ribosomal subunits, and thus maintains levels of free tRNAs and 50S ribosomes. In Streptococcus pneumoniae (strain JJA), this protein is Peptidyl-tRNA hydrolase.